The following is a 278-amino-acid chain: Release factor glutamine methyltransferase (278 aa).

S-adenosyl-L-methionine-binding positions include 116 to 120 (GTGTG), D139, W168, and N182. Residue 182-185 (NPPY) coordinates substrate.

Belongs to the protein N5-glutamine methyltransferase family. PrmC subfamily.

The enzyme catalyses L-glutaminyl-[peptide chain release factor] + S-adenosyl-L-methionine = N(5)-methyl-L-glutaminyl-[peptide chain release factor] + S-adenosyl-L-homocysteine + H(+). Methylates the class 1 translation termination release factors RF1/PrfA and RF2/PrfB on the glutamine residue of the universally conserved GGQ motif. This chain is Release factor glutamine methyltransferase, found in Cereibacter sphaeroides (strain ATCC 17023 / DSM 158 / JCM 6121 / CCUG 31486 / LMG 2827 / NBRC 12203 / NCIMB 8253 / ATH 2.4.1.) (Rhodobacter sphaeroides).